The primary structure comprises 1178 residues: Pesticidal crystal protein Cry1Ac (1178 aa).

Belongs to the delta endotoxin family.

In terms of biological role, promotes colloidosmotic lysis by binding to the midgut epithelial cells of many lepidopteran larvae. This chain is Pesticidal crystal protein Cry1Ac (cry1Ac), found in Bacillus thuringiensis subsp. kurstaki.